Reading from the N-terminus, the 119-residue chain is MARVKRAMHARKKHKKILKLAKGYYGRRSRTFKNANETVLRAMNFAYVGRKLKKRDFRRLWIARINAAARMNGLSYSKFMNGIKLAGINMNRKMLSEIAINDEKAFADLVEVAKKQLNA.

The protein belongs to the bacterial ribosomal protein bL20 family.

In terms of biological role, binds directly to 23S ribosomal RNA and is necessary for the in vitro assembly process of the 50S ribosomal subunit. It is not involved in the protein synthesizing functions of that subunit. The sequence is that of Large ribosomal subunit protein bL20 from Clostridium novyi (strain NT).